We begin with the raw amino-acid sequence, 354 residues long: Methionine import ATP-binding protein MetN (354 aa).

Residues 8–250 form the ABC transporter domain; sequence LDHIDITFRQ…PKEALTQKFI (243 aa). 42–49 contributes to the ATP binding site; the sequence is GYSGAGKS.

This sequence belongs to the ABC transporter superfamily. Methionine importer (TC 3.A.1.24) family. In terms of assembly, the complex is composed of two ATP-binding proteins (MetN), two transmembrane proteins (MetI) and a solute-binding protein (MetQ).

The protein localises to the cell membrane. The catalysed reaction is L-methionine(out) + ATP + H2O = L-methionine(in) + ADP + phosphate + H(+). It catalyses the reaction D-methionine(out) + ATP + H2O = D-methionine(in) + ADP + phosphate + H(+). Functionally, part of the ABC transporter complex MetNIQ involved in methionine import. Responsible for energy coupling to the transport system. In Streptococcus pyogenes serotype M18 (strain MGAS8232), this protein is Methionine import ATP-binding protein MetN.